We begin with the raw amino-acid sequence, 254 residues long: Cold shock-induced protein TIR1 (254 aa).

Positions M1–A18 are cleaved as a signal peptide. Positions N110–I213 are disordered. Over residues A113–K197 the composition is skewed to low complexity. Repeat copies occupy residues S114–P119, S120–P125, T126–P131, S132–P137, T138–S143, S144–P155, S156–P167, S168–P179, S180–P191, and S192–P203. The interval S114 to S143 is 5 X 6 AA approximate tandem repeats, Ala/Ser-rich. The 5 X 12 AA approximate tandem repeats, Ala/Ser-rich stretch occupies residues S144–P203. The span at A201–I213 shows a compositional bias: polar residues. Residues T210–T224 form a PIR1/2/3 repeat. A lipid anchor (GPI-anchor amidated asparagine) is attached at N233. Positions G234–L254 are cleaved as a propeptide — removed in mature form.

The protein belongs to the SRP1/TIP1 family. In terms of processing, O-glycosylated. The GPI-anchor is attached to the protein in the endoplasmic reticulum and serves to target the protein to the cell surface. There, the glucosamine-inositol phospholipid moiety is cleaved off and the GPI-modified mannoprotein is covalently attached via its lipidless GPI glycan remnant to the 1,6-beta-glucan of the outer cell wall layer. Post-translationally, covalently linked to beta-1,3-glucan of the inner cell wall layer via an alkali-sensitive ester linkage between the gamma-carboxyl group of glutamic acids, arising from a specific glutamine within the PIR1/2/3 repeat, and hydroxyl groups of glucoses of beta-1,3-glucan chains.

The protein resides in the secreted. It is found in the cell wall. The protein localises to the membrane. Its function is as follows. Component of the cell wall. Required for anaerobic growth. The sequence is that of Cold shock-induced protein TIR1 (TIR1) from Saccharomyces cerevisiae (strain ATCC 204508 / S288c) (Baker's yeast).